The sequence spans 132 residues: Small ribosomal subunit protein uS8c (132 aa).

Belongs to the universal ribosomal protein uS8 family. As to quaternary structure, part of the 30S ribosomal subunit.

Its subcellular location is the plastid. It localises to the chloroplast. Its function is as follows. One of the primary rRNA binding proteins, it binds directly to 16S rRNA central domain where it helps coordinate assembly of the platform of the 30S subunit. This is Small ribosomal subunit protein uS8c (rps8) from Buxus microphylla (Littleleaf boxwood).